A 231-amino-acid chain; its full sequence is NADH-ubiquinone oxidoreductase chain 4 (231 aa).

6 helical membrane-spanning segments follow: residues P1 to I21, M34 to L54, S61 to I80, G85 to A107, I128 to P148, and T169 to L189.

This sequence belongs to the complex I subunit 4 family.

The protein resides in the mitochondrion membrane. The catalysed reaction is a ubiquinone + NADH + 5 H(+)(in) = a ubiquinol + NAD(+) + 4 H(+)(out). Functionally, core subunit of the mitochondrial membrane respiratory chain NADH dehydrogenase (Complex I) that is believed to belong to the minimal assembly required for catalysis. Complex I functions in the transfer of electrons from NADH to the respiratory chain. The immediate electron acceptor for the enzyme is believed to be ubiquinone. In Gloydius blomhoffii (Mamushi), this protein is NADH-ubiquinone oxidoreductase chain 4 (MT-ND4).